The chain runs to 314 residues: L-lactate dehydrogenase 1 (314 aa).

Residues Val16, Asp37, Lys42, Tyr68, and 82-83 each bind NAD(+); that span reads GL. Substrate-binding positions include Gln85, Arg91, and 123–126; that span reads NPVD. NAD(+)-binding positions include 121 to 123 and Ser146; that span reads ATN. Residue 151–154 participates in substrate binding; sequence DSAR. Beta-D-fructose 1,6-bisphosphate-binding residues include Arg156 and His171. His178 serves as the catalytic Proton acceptor. Tyr223 carries the post-translational modification Phosphotyrosine. Residue Thr232 participates in substrate binding.

This sequence belongs to the LDH/MDH superfamily. LDH family. As to quaternary structure, homotetramer.

It is found in the cytoplasm. It carries out the reaction (S)-lactate + NAD(+) = pyruvate + NADH + H(+). It participates in fermentation; pyruvate fermentation to lactate; (S)-lactate from pyruvate: step 1/1. With respect to regulation, allosterically activated by fructose 1,6-bisphosphate (FBP). Functionally, catalyzes the conversion of lactate to pyruvate. This chain is L-lactate dehydrogenase 1, found in Bacillus anthracis.